Here is a 113-residue protein sequence, read N- to C-terminus: U11-theraphotoxin-Hhn1q (113 aa).

A signal peptide spans 1 to 21; that stretch reads MNTVRVTFLLVFVLAVSLGQA. Positions 22–74 are excised as a propeptide; sequence DKDENRMEMQEKTEQGKSYLDFAENLLLQKLEELEAKLLEEDSEESRNSRQKR. A disordered region spans residues 61 to 82; the sequence is EEDSEESRNSRQKRCIGEGVPC. 3 disulfide bridges follow: cysteine 75-cysteine 90, cysteine 82-cysteine 95, and cysteine 89-cysteine 110.

Belongs to the neurotoxin 14 (magi-1) family. 01 (HNTX-16) subfamily. In terms of tissue distribution, expressed by the venom gland.

It localises to the secreted. Functionally, probable ion channel inhibitor. The chain is U11-theraphotoxin-Hhn1q from Cyriopagopus hainanus (Chinese bird spider).